The following is a 109-amino-acid chain: Parvalbumin-7 (109 aa).

Ala-2 carries the N-acetylalanine modification. 2 EF-hand domains span residues 39 to 74 (LSAD…FSAD) and 78 to 109 (LTDK…LVHE). Residues Asp-52, Asp-54, Ser-56, Phe-58, Glu-60, Glu-63, Asp-91, Asp-93, Asp-95, Lys-97, and Glu-102 each coordinate Ca(2+).

It belongs to the parvalbumin family.

Its function is as follows. In muscle, parvalbumin is thought to be involved in relaxation after contraction. It binds two calcium ions. The protein is Parvalbumin-7 (pvalb7) of Danio rerio (Zebrafish).